The sequence spans 412 residues: G-protein coupled receptor homolog UL33 (412 aa).

The Virion surface portion of the chain corresponds to 1 to 29 (MDTIIHNSTRNNTPPHINDTCNMTGPLFA). 3 N-linked (GlcNAc...) asparagine; by host glycosylation sites follow: Asn7, Asn18, and Asn22. The helical transmembrane segment at 30–54 (IRTTEAVLNTFIIFVGGPLNAIVLI) threads the bilayer. Topologically, residues 55-70 (TQLLTNRVLGYSTPTI) are intravirion. A helical transmembrane segment spans residues 71 to 95 (YMTNLYSTNFLTLTVLPFIVLSNQW). Residues 96-102 (LLPAGVA) lie on the Virion surface side of the membrane. Residues 103-129 (SCKFLSVIYYSSCTVGFATVALIAADR) form a helical membrane-spanning segment. Cys104 and Cys188 are joined by a disulfide. The Intravirion segment spans residues 130-138 (YRVLHKRTY). Residues 139–160 (ARQSYRSTYMILLLTWLAGLIF) form a helical membrane-spanning segment. Residues 161–203 (SVPAAVYTTVVMHHDANDTNNTNGHATCVLYFVAEEVHTVLLS) lie on the Virion surface side of the membrane. Residues Asn177 and Asn180 are each glycosylated (N-linked (GlcNAc...) asparagine; by host). Residues 204–224 (WKVLLTMVWGAAPVIMMTWFY) traverse the membrane as a helical segment. The Intravirion portion of the chain corresponds to 225–240 (AFFYSTVQRTSQKQRS). A helical membrane pass occupies residues 241–267 (RTLTFVSVLLISFVALQTPYVSLMIFN). Topologically, residues 268-281 (SYATTAWPMQCEHL) are virion surface. Residues 282–305 (TLRRTIGTLARVVPHLHCLINPIL) form a helical membrane-spanning segment. The Intravirion segment spans residues 306 to 412 (YALLGHDFLQ…SQSHHNLSGV (107 aa)). A disordered region spans residues 377-412 (NFPSGTWKGGQKTASNDTSTKIPHRLSQSHHNLSGV). The segment covering 388–397 (KTASNDTSTK) has biased composition (polar residues).

The protein belongs to the G-protein coupled receptor 1 family. Heterodimerizes with US28.

It is found in the virion. It localises to the host cell membrane. The protein localises to the host cytoplasm. In terms of biological role, G-protein-coupled receptor (vGPCR) that constitutively activates multiple oncogenic signaling pathways including STAT3, AP-1, phospholipase C, NF-kappa-B or cAMP-responsive element (CRE) pathways. Plays an important role in viral reactivation from latency through activation of host CREB1, facilitating its recruitment to the viral major immediate early (MIE) genes. In turn, expression of the MIE-driven genes such as UL123 are de-repressed. Also facilitates virus dissemination via the extracellular and cell-to-cell route. The sequence is that of G-protein coupled receptor homolog UL33 (UL33) from Human cytomegalovirus (strain AD169) (HHV-5).